The chain runs to 289 residues: Phosphatidylglycerol--prolipoprotein diacylglyceryl transferase (289 aa).

7 helical membrane passes run 17-37 (LAVR…ILLG), 57-77 (MLFY…IFFY), 89-109 (IFAV…VIAA), 121-141 (WLVV…AGRI), 174-194 (QLYE…IYSA), 200-220 (GAVS…AEFF), and 235-255 (ISMG…MLVW). Arg-140 serves as a coordination point for a 1,2-diacyl-sn-glycero-3-phospho-(1'-sn-glycerol).

This sequence belongs to the Lgt family.

The protein resides in the cell inner membrane. It catalyses the reaction L-cysteinyl-[prolipoprotein] + a 1,2-diacyl-sn-glycero-3-phospho-(1'-sn-glycerol) = an S-1,2-diacyl-sn-glyceryl-L-cysteinyl-[prolipoprotein] + sn-glycerol 1-phosphate + H(+). The protein operates within protein modification; lipoprotein biosynthesis (diacylglyceryl transfer). Its function is as follows. Catalyzes the transfer of the diacylglyceryl group from phosphatidylglycerol to the sulfhydryl group of the N-terminal cysteine of a prolipoprotein, the first step in the formation of mature lipoproteins. The chain is Phosphatidylglycerol--prolipoprotein diacylglyceryl transferase from Nitrosospira multiformis (strain ATCC 25196 / NCIMB 11849 / C 71).